Reading from the N-terminus, the 154-residue chain is NADPH-dependent 7-cyano-7-deazaguanine reductase (154 aa).

Residues 1–24 (MPKTDVSGLSQLGTKVDLPQSPEE) are disordered. Cys-52 acts as the Thioimide intermediate in catalysis. Asp-59 functions as the Proton donor in the catalytic mechanism. Substrate-binding positions include 74-76 (VES) and 93-94 (HE).

Belongs to the GTP cyclohydrolase I family. QueF type 1 subfamily.

It is found in the cytoplasm. It carries out the reaction 7-aminomethyl-7-carbaguanine + 2 NADP(+) = 7-cyano-7-deazaguanine + 2 NADPH + 3 H(+). It functions in the pathway tRNA modification; tRNA-queuosine biosynthesis. Its function is as follows. Catalyzes the NADPH-dependent reduction of 7-cyano-7-deazaguanine (preQ0) to 7-aminomethyl-7-deazaguanine (preQ1). This is NADPH-dependent 7-cyano-7-deazaguanine reductase from Sinorhizobium fredii (strain NBRC 101917 / NGR234).